Consider the following 172-residue polypeptide: Peptide deformylase (172 aa).

2 residues coordinate Fe cation: Cys-91 and His-133. Residue Glu-134 is part of the active site. Fe cation is bound at residue His-137.

This sequence belongs to the polypeptide deformylase family. Fe(2+) is required as a cofactor.

It catalyses the reaction N-terminal N-formyl-L-methionyl-[peptide] + H2O = N-terminal L-methionyl-[peptide] + formate. Removes the formyl group from the N-terminal Met of newly synthesized proteins. Requires at least a dipeptide for an efficient rate of reaction. N-terminal L-methionine is a prerequisite for activity but the enzyme has broad specificity at other positions. The protein is Peptide deformylase of Vibrio campbellii (strain ATCC BAA-1116).